Reading from the N-terminus, the 164-residue chain is FMN reductase (NADH) RutF (164 aa).

Belongs to the non-flavoprotein flavin reductase family. RutF subfamily.

It catalyses the reaction FMNH2 + NAD(+) = FMN + NADH + 2 H(+). Functionally, catalyzes the reduction of FMN to FMNH2 which is used to reduce pyrimidine by RutA via the Rut pathway. This chain is FMN reductase (NADH) RutF, found in Klebsiella pneumoniae (strain 342).